The primary structure comprises 581 residues: Probable hexosyltransferase MUCI70 (581 aa).

Residues 1 to 58 (MTGLGVRSSSYGSLEKTGLNGVVLPIQITTTTRTKPSKMQKDREGIVHWICKFAGRKK) are Cytoplasmic-facing. Residues 59–79 (VGMLLLFLISAVVFLRVLYVG) traverse the membrane as a helical; Signal-anchor for type II membrane protein segment. The Lumenal segment spans residues 80–581 (KGEDSQEGQG…NLPVRLPDSA (502 aa)). Asn-96, Asn-102, Asn-119, Asn-194, Asn-224, Asn-285, Asn-382, Asn-411, and Asn-488 each carry an N-linked (GlcNAc...) asparagine glycan. A disordered region spans residues 514–581 (RFARQRPPVP…NLPVRLPDSA (68 aa)). Pro residues predominate over residues 520-536 (PPVPNFPPPPPSPPPPV). The span at 553 to 571 (PPRRRGRDRRSGQRGHRKA) shows a compositional bias: basic residues.

The protein belongs to the glycosyltransferase 8 family. In terms of tissue distribution, expressed in siliques and seeds.

Its subcellular location is the golgi apparatus membrane. Its pathway is glycan metabolism; pectin biosynthesis. Functionally, probable glycosyltransferase involved in pectin and/or xylans biosynthesis in cell walls. Together with IRX14, required for xylan and pectin synthesis in seed coat epidermal (SCE) cells. Collaboratively with GAUT11, essential for the accumulation of seed mucilage, a gelatinous wall rich in unbranched rhamnogalacturonan I (RG I), and for shaping the surface morphology of seeds. The chain is Probable hexosyltransferase MUCI70 from Arabidopsis thaliana (Mouse-ear cress).